The chain runs to 610 residues: All-trans-retinol 13,14-reductase (610 aa).

Positions 1-18 (MWLPLVLLLAVLLLAVLC) are cleaved as a signal peptide.

It belongs to the carotenoid/retinoid oxidoreductase family. CrtISO subfamily. NAD(+) is required as a cofactor. The cofactor is NADP(+). It depends on FAD as a cofactor. Expressed in liver; expression positively correlates with obesity and liver steatosis. Expressed in adipose tissue; expression tends to be decreased in obese versus lean individuals.

The protein resides in the endoplasmic reticulum membrane. It carries out the reaction all-trans-13,14-dihydroretinol + A = all-trans-retinol + AH2. In terms of biological role, catalyzes the saturation of all-trans-retinol to all-trans-13,14-dihydroretinol. Does not exhibit any activity toward all-trans-retinoic acid, nor 9-cis, 11-cis or 13-cis-retinol isomers. May play a role in the metabolism of vitamin A. Independently of retinol conversion, may regulate liver metabolism upstream of MLXIPL/ChREBP. May play a role in adipocyte differentiation. The chain is All-trans-retinol 13,14-reductase (RETSAT) from Homo sapiens (Human).